We begin with the raw amino-acid sequence, 757 residues long: Exo-alpha-(1-&gt;6)-L-arabinopyranosidase (757 aa).

Aspartate 232 is a catalytic residue.

This sequence belongs to the glycosyl hydrolase 3 family. Homotetramer.

Completely inhibited by Cu(2+) and Fe(2+). Catalyzes the hydrolysis of a non-reducing terminal alpha-L-arabinopyranosidic linkage in ginsenoside Rb2 (alpha-L-arabinopyranosyl-(1-&gt;6)-alpha-D-glucopyranosyl) to release alpha-D-glucopyranosyl (Rd). It is not able to hydrolyze alpha-L-arabinofuranosyl-(1-&gt;6)-alpha-D-glucopyranosyl (Rc). This chain is Exo-alpha-(1-&gt;6)-L-arabinopyranosidase, found in Bifidobacterium breve (strain ACS-071-V-Sch8b).